We begin with the raw amino-acid sequence, 250 residues long: Cobalt transport protein CbiM (250 aa).

A signal peptide spans Met-1–Ala-27. 6 helical membrane-spanning segments follow: residues Gly-33–Val-53, Leu-70–Val-90, Leu-102–Phe-122, Thr-134–Phe-154, Val-168–Ala-188, and Ile-208–Trp-228.

Belongs to the CbiM family. Forms an energy-coupling factor (ECF) transporter complex composed of an ATP-binding protein (A component, CbiO), a transmembrane protein (T component, CbiQ) and 2 possible substrate-capture proteins (S components, CbiM and CbiN) of unknown stoichimetry.

It is found in the cell membrane. The protein operates within cofactor biosynthesis; adenosylcobalamin biosynthesis. Its function is as follows. Part of the energy-coupling factor (ECF) transporter complex CbiMNOQ involved in cobalt import. The polypeptide is Cobalt transport protein CbiM (Anoxybacillus flavithermus (strain DSM 21510 / WK1)).